Consider the following 156-residue polypeptide: E3 ubiquitin-protein ligase LAP (156 aa).

The RING-CH-type zinc finger occupies 1-55 (MSDICWICNDVCDERNNFCGCNEEYKVVHIKCMQLWINYSKKKECNLCKTKYNIK). The Cytoplasmic portion of the chain corresponds to 1-73 (MSDICWICND…WNWCFNDKKT (73 aa)). 8 residues coordinate Zn(2+): cysteine 5, cysteine 8, cysteine 19, cysteine 21, histidine 29, cysteine 32, cysteine 45, and cysteine 48. Residues 74 to 94 (TLFKIFFILFALVFIFLTITL) traverse the membrane as a helical segment. Over 95–111 (SNDMANLVTGINDLICS) the chain is Lumenal. The chain crosses the membrane as a helical span at residues 112 to 132 (IIFLIVYTVVMLTSICFSVFV). Over 133–156 (VAIVVDFLLEAKEKNSFLTIREIV) the chain is Cytoplasmic.

The protein belongs to the poxviridae LAP protein family.

Its subcellular location is the host membrane. It localises to the host Golgi apparatus. The protein resides in the host trans-Golgi network membrane. It is found in the host early endosome membrane. It catalyses the reaction S-ubiquitinyl-[E2 ubiquitin-conjugating enzyme]-L-cysteine + [acceptor protein]-L-lysine = [E2 ubiquitin-conjugating enzyme]-L-cysteine + N(6)-ubiquitinyl-[acceptor protein]-L-lysine.. Functionally, E3 ubiquitin-protein ligase which promotes ubiquitination and subsequent degradation of host MHC-I and CD4 molecules, presumably to prevent lysis of infected cells by cytotoxic T-lymphocytes and NK cell. Binds target molecules through transmembrane interaction. The result of this ubiquitination is the enhancement of the endocytosis of the target chain and the delivery to the lysosome, where it is proteolytically destroyed. The protein is E3 ubiquitin-protein ligase LAP of Yaba-like disease virus (YLDV).